We begin with the raw amino-acid sequence, 131 residues long: D-ribose pyranase (131 aa).

Residue H20 is the Proton donor of the active site. Substrate is bound by residues D28, H98, and 120–122 (YCN).

The protein belongs to the RbsD / FucU family. RbsD subfamily. In terms of assembly, homodecamer.

Its subcellular location is the cytoplasm. The catalysed reaction is beta-D-ribopyranose = beta-D-ribofuranose. Its pathway is carbohydrate metabolism; D-ribose degradation; D-ribose 5-phosphate from beta-D-ribopyranose: step 1/2. Functionally, catalyzes the interconversion of beta-pyran and beta-furan forms of D-ribose. The chain is D-ribose pyranase from Coprothermobacter proteolyticus (strain ATCC 35245 / DSM 5265 / OCM 4 / BT).